A 214-amino-acid chain; its full sequence is Immunoglobulin lambda-like polypeptide 5 (214 aa).

Positions 1–35 (MRPKTGQVGCETPEELGPGPRQRWPLLLLGLAMVA) are cleaved as a signal peptide. The j region stretch occupies residues 98–109 (VFGTGTKVTVLG). The interval 110-214 (QPKANPTVTL…EKTVAPTECS (105 aa)) is c region. The Ig-like C1-type domain maps to 115-209 (PTVTLFPPSS…EGSTVEKTVA (95 aa)). A disulfide bridge links cysteine 136 with cysteine 195.

Contrary to IGLL1, not expressed in pre-B-cells.

It localises to the secreted. This Homo sapiens (Human) protein is Immunoglobulin lambda-like polypeptide 5 (IGLL5).